The chain runs to 445 residues: Phosphoglucosamine mutase (445 aa).

S102 (phosphoserine intermediate) is an active-site residue. Positions 102, 240, 242, and 244 each coordinate Mg(2+). Residue S102 is modified to Phosphoserine.

This sequence belongs to the phosphohexose mutase family. Mg(2+) serves as cofactor. Activated by phosphorylation.

It catalyses the reaction alpha-D-glucosamine 1-phosphate = D-glucosamine 6-phosphate. Functionally, catalyzes the conversion of glucosamine-6-phosphate to glucosamine-1-phosphate. The polypeptide is Phosphoglucosamine mutase (Mycolicibacterium vanbaalenii (strain DSM 7251 / JCM 13017 / BCRC 16820 / KCTC 9966 / NRRL B-24157 / PYR-1) (Mycobacterium vanbaalenii)).